The following is a 420-amino-acid chain: D-tagatose-1,6-bisphosphate aldolase subunit GatZ (420 aa).

The protein belongs to the GatZ/KbaZ family. GatZ subfamily. As to quaternary structure, forms a complex with GatY.

It participates in carbohydrate metabolism; D-tagatose 6-phosphate degradation; D-glyceraldehyde 3-phosphate and glycerone phosphate from D-tagatose 6-phosphate: step 2/2. Functionally, component of the tagatose-1,6-bisphosphate aldolase GatYZ that is required for full activity and stability of the Y subunit. Could have a chaperone-like function for the proper and stable folding of GatY. When expressed alone, GatZ does not show any aldolase activity. Is involved in the catabolism of galactitol. The protein is D-tagatose-1,6-bisphosphate aldolase subunit GatZ of Escherichia coli O7:K1 (strain IAI39 / ExPEC).